A 373-amino-acid polypeptide reads, in one-letter code: NK1 transcription factor-related protein 1 (373 aa).

Disordered stretches follow at residues 49–74 (ALPAESRETSPRHEPVPAGAPPTVHR), 149–231 (SDFT…RRAR), and 281–328 (KWKK…SMHT). The segment covering 53-63 (ESRETSPRHEP) has biased composition (basic and acidic residues). The segment covering 168 to 177 (EESSALTGNN) has biased composition (polar residues). Residues 196-210 (GQQTQQSSSNGQNHQ) show a composition bias toward low complexity. Residues 227–286 (PRRARTAFTYEQLVALENKFKSTRYLSVCERLNLALSLSLTETQVKIWFQNRRTKWKKQN) constitute a DNA-binding region (homeobox). The span at 296–310 (SGGGGGNGPSNGLGG) shows a compositional bias: gly residues.

Belongs to the NK-1 homeobox family.

The protein localises to the nucleus. Its function is as follows. May participate in the energy homeostasis regulation. The protein is NK1 transcription factor-related protein 1 of Danio rerio (Zebrafish).